Consider the following 820-residue polypeptide: Cell division control protein 48 homolog C (820 aa).

2 disordered regions span residues 72–157 (RVKD…RFDL) and 169–188 (LNSS…VEVE). Residues 76-87 (EDEDDNIGDEEG) show a composition bias toward acidic residues. The stretch at 85–122 (EEGSASQRKKQRRVDEKEEKLQRAEQSHLRKRNMERSV) forms a coiled coil. Positions 97–119 (RVDEKEEKLQRAEQSHLRKRNME) are enriched in basic and acidic residues. Low complexity predominate over residues 121 to 142 (SVSSSPSSSSSSEDSGDVSTSE). Residues 274–281 (GPPGCGKT) and 569–576 (GPPGCGKT) each bind ATP.

Belongs to the AAA ATPase family.

The protein localises to the nucleus. The protein resides in the cytoplasm. It localises to the cytoskeleton. It is found in the phragmoplast. Its function is as follows. Probably functions in cell division and growth processes. Interacts with certain SNAREs as part of specialized membrane fusion events where vesicles from the same organelle fuse (homotypic fusion). The sequence is that of Cell division control protein 48 homolog C (CDC48C) from Arabidopsis thaliana (Mouse-ear cress).